Consider the following 147-residue polypeptide: Small ribosomal subunit protein eS19 (147 aa).

The protein belongs to the eukaryotic ribosomal protein eS19 family. As to quaternary structure, component of the small ribosomal subunit.

The protein localises to the cytoplasm. It localises to the nucleus. Component of the small ribosomal subunit. The ribosome is a large ribonucleoprotein complex responsible for the synthesis of proteins in the cell. Required for pre-rRNA processing and maturation of 40S ribosomal subunits. The sequence is that of Small ribosomal subunit protein eS19 (rps19) from Ictalurus punctatus (Channel catfish).